The following is a 285-amino-acid chain: Golgi to ER traffic protein 2 (285 aa).

Residues 1–10 show a composition bias toward basic and acidic residues; sequence MSELTEAEKR. 2 disordered regions span residues 1–72 and 87–106; these read MSEL…KEDS and MQGQ…PDLL. S2 carries the N-acetylserine modification. Over 2–148 the chain is Cytoplasmic; sequence SELTEAEKRR…LDYHDYLLNR (147 aa). Residues 11 to 20 are compositionally biased toward basic residues; sequence RLLRERRQKK. The span at 24 to 42 shows a compositional bias: polar residues; that stretch reads GGASSRLNKITGQASSHLN. S45 is subject to Phosphoserine. Positions 49 to 60 are enriched in low complexity; the sequence is APSAAKTTPPAS. Residues 93–104 show a composition bias toward polar residues; it reads GKSTPQDSSTPD. Residues 149–169 traverse the membrane as a helical segment; sequence LKAWTILVKWVFFLLPYLYLI. Topologically, residues 170–196 are lumenal; that stretch reads TRPNSSVWPAYAFTQSAWFAPLRNPSN. N-linked (GlcNAc...) asparagine glycosylation is found at N173 and N196. The helical transmembrane segment at 197–216 threads the bilayer; sequence FTRIFATFEFLSISIYYQLL. Residues 217 to 263 lie on the Cytoplasmic side of the membrane; that stretch reads KNVEHKSKIKNLQDTNKLVKLVSLVPEGVIPVANLKGKLITLLQYWD. Residues 264–284 form a helical membrane-spanning segment; the sequence is LLSMLITDISFVLIVLGLLTY. Position 285 (L285) is a topological domain, lumenal.

It belongs to the GET2 family. As to quaternary structure, component of the Golgi to ER traffic (GET) complex, which is composed of GET1, GET2 and GET3. Within the complex, GET1 and GET2 form a heterotetramer which is stabilized by phosphatidylinositol binding and which binds to the GET3 homodimer.

Its subcellular location is the endoplasmic reticulum membrane. The protein localises to the golgi apparatus membrane. In terms of biological role, required for the post-translational delivery of tail-anchored (TA) proteins to the endoplasmic reticulum. Together with GET1, acts as a membrane receptor for soluble GET3, which recognizes and selectively binds the transmembrane domain of TA proteins in the cytosol. The GET complex cooperates with the HDEL receptor ERD2 to mediate the ATP-dependent retrieval of resident ER proteins that contain a C-terminal H-D-E-L retention signal from the Golgi to the ER. Involved in DNA replication and DNA damage response and also in cell wall function. The sequence is that of Golgi to ER traffic protein 2 from Saccharomyces cerevisiae (strain RM11-1a) (Baker's yeast).